Reading from the N-terminus, the 591-residue chain is Aspartate--tRNA(Asp/Asn) ligase (591 aa).

Glutamate 174 serves as a coordination point for L-aspartate. The aspartate stretch occupies residues 198-201 (QLFK). Position 220 (arginine 220) interacts with L-aspartate. Residues 220–222 (RDE) and glutamine 229 contribute to the ATP site. Position 450 (histidine 450) interacts with L-aspartate. ATP is bound at residue glutamate 483. Residue arginine 490 coordinates L-aspartate. Residue 535–538 (GLDR) coordinates ATP.

The protein belongs to the class-II aminoacyl-tRNA synthetase family. Type 1 subfamily. In terms of assembly, homodimer.

It localises to the cytoplasm. It catalyses the reaction tRNA(Asx) + L-aspartate + ATP = L-aspartyl-tRNA(Asx) + AMP + diphosphate. Aspartyl-tRNA synthetase with relaxed tRNA specificity since it is able to aspartylate not only its cognate tRNA(Asp) but also tRNA(Asn). Reaction proceeds in two steps: L-aspartate is first activated by ATP to form Asp-AMP and then transferred to the acceptor end of tRNA(Asp/Asn). This Pseudomonas putida (strain GB-1) protein is Aspartate--tRNA(Asp/Asn) ligase.